A 434-amino-acid polypeptide reads, in one-letter code: Cobyrinate a,c-diamide synthase (434 aa).

Positions 239-430 (KMAIAYDPAF…SHLHFSNFQL (192 aa)) constitute a GATase cobBQ-type domain. Residue C320 is the Nucleophile of the active site.

Belongs to the CobB/CbiA family. The cofactor is Mg(2+).

The enzyme catalyses cob(II)yrinate + 2 L-glutamine + 2 ATP + 2 H2O = cob(II)yrinate a,c diamide + 2 L-glutamate + 2 ADP + 2 phosphate + 2 H(+). It functions in the pathway cofactor biosynthesis; adenosylcobalamin biosynthesis; cob(II)yrinate a,c-diamide from sirohydrochlorin (anaerobic route): step 10/10. Functionally, catalyzes the ATP-dependent amidation of the two carboxylate groups at positions a and c of cobyrinate, using either L-glutamine or ammonia as the nitrogen source. The polypeptide is Cobyrinate a,c-diamide synthase (Saccharolobus solfataricus (strain ATCC 35092 / DSM 1617 / JCM 11322 / P2) (Sulfolobus solfataricus)).